Consider the following 187-residue polypeptide: Transcriptional regulator VspR (187 aa).

In terms of biological role, represses the transcription of several genes encoded within the Vibrio 7th pandemic island-1 (VSP-1), including dncV, VC_0176, VC_0178 and VC_0180. The protein is Transcriptional regulator VspR (vspR) of Vibrio cholerae serotype O1 (strain ATCC 39315 / El Tor Inaba N16961).